Consider the following 184-residue polypeptide: Probable RNA 2'-phosphotransferase (184 aa).

This sequence belongs to the KptA/TPT1 family.

Functionally, removes the 2'-phosphate from RNA via an intermediate in which the phosphate is ADP-ribosylated by NAD followed by a presumed transesterification to release the RNA and generate ADP-ribose 1''-2''-cyclic phosphate (APPR&gt;P). May function as an ADP-ribosylase. This Burkholderia pseudomallei (strain K96243) protein is Probable RNA 2'-phosphotransferase.